The following is a 111-amino-acid chain: WAP four-disulfide core domain protein 12 (111 aa).

A signal peptide spans 1-23 (MGSSSFLVLMVSLVLVTLVAVEG). The region spanning 27–74 (GIEKAGVCPADNVRCFKSDPPQCHTDQDCLGERKCCYLHCGFKCVIPV) is the WAP domain. 4 disulfide bridges follow: Cys34/Cys62, Cys41/Cys66, Cys49/Cys61, and Cys55/Cys70. A disordered region spans residues 80–111 (GGNKDEDVSRPYPEPGWEAKCPGSSSTRCPQK). Positions 102-111 (GSSSTRCPQK) are enriched in polar residues.

Highly expressed in prostate, skin, lung and esophagus. Weakly expressed in skeletal muscle, epididymis, kidney, trachea, salivary gland, testis and seminal vesicle.

The protein resides in the secreted. Functionally, antibacterial protein. Putative acid-stable proteinase inhibitor. This chain is WAP four-disulfide core domain protein 12 (WFDC12), found in Homo sapiens (Human).